The chain runs to 489 residues: N-succinylglutamate 5-semialdehyde dehydrogenase 1 (489 aa).

223–228 (GSSRTG) contributes to the NAD(+) binding site. Residues Glu246 and Cys280 contribute to the active site.

This sequence belongs to the aldehyde dehydrogenase family. AstD subfamily.

The catalysed reaction is N-succinyl-L-glutamate 5-semialdehyde + NAD(+) + H2O = N-succinyl-L-glutamate + NADH + 2 H(+). It participates in amino-acid degradation; L-arginine degradation via AST pathway; L-glutamate and succinate from L-arginine: step 4/5. Functionally, catalyzes the NAD-dependent reduction of succinylglutamate semialdehyde into succinylglutamate. In Pseudoalteromonas translucida (strain TAC 125), this protein is N-succinylglutamate 5-semialdehyde dehydrogenase 1.